A 178-amino-acid polypeptide reads, in one-letter code: Cytidylate kinase (178 aa).

Residue 7 to 15 participates in ATP binding; it reads GLPGSGTTS.

It belongs to the cytidylate kinase family. Type 2 subfamily.

It localises to the cytoplasm. It carries out the reaction CMP + ATP = CDP + ADP. The catalysed reaction is dCMP + ATP = dCDP + ADP. The chain is Cytidylate kinase from Methanospirillum hungatei JF-1 (strain ATCC 27890 / DSM 864 / NBRC 100397 / JF-1).